Here is a 370-residue protein sequence, read N- to C-terminus: Queuine tRNA-ribosyltransferase (370 aa).

Asp93 functions as the Proton acceptor in the catalytic mechanism. Residues 93 to 97 (DSGGF), Asp147, Gln189, and Gly216 contribute to the substrate site. The interval 247-253 (GVGSPDC) is RNA binding. The active-site Nucleophile is the Asp266. The interval 271-275 (TRIAR) is RNA binding; important for wobble base 34 recognition. Residues Cys304, Cys306, Cys309, and His335 each contribute to the Zn(2+) site.

It belongs to the queuine tRNA-ribosyltransferase family. As to quaternary structure, homodimer. Within each dimer, one monomer is responsible for RNA recognition and catalysis, while the other monomer binds to the replacement base PreQ1. Requires Zn(2+) as cofactor.

The catalysed reaction is 7-aminomethyl-7-carbaguanine + guanosine(34) in tRNA = 7-aminomethyl-7-carbaguanosine(34) in tRNA + guanine. Its pathway is tRNA modification; tRNA-queuosine biosynthesis. Catalyzes the base-exchange of a guanine (G) residue with the queuine precursor 7-aminomethyl-7-deazaguanine (PreQ1) at position 34 (anticodon wobble position) in tRNAs with GU(N) anticodons (tRNA-Asp, -Asn, -His and -Tyr). Catalysis occurs through a double-displacement mechanism. The nucleophile active site attacks the C1' of nucleotide 34 to detach the guanine base from the RNA, forming a covalent enzyme-RNA intermediate. The proton acceptor active site deprotonates the incoming PreQ1, allowing a nucleophilic attack on the C1' of the ribose to form the product. After dissociation, two additional enzymatic reactions on the tRNA convert PreQ1 to queuine (Q), resulting in the hypermodified nucleoside queuosine (7-(((4,5-cis-dihydroxy-2-cyclopenten-1-yl)amino)methyl)-7-deazaguanosine). This chain is Queuine tRNA-ribosyltransferase, found in Pelotomaculum thermopropionicum (strain DSM 13744 / JCM 10971 / SI).